The following is a 524-amino-acid chain: GMP synthase [glutamine-hydrolyzing] (524 aa).

A Glutamine amidotransferase type-1 domain is found at 12-201; it reads TILVLDFGSQ…AVDICKASQS (190 aa). The active-site Nucleophile is Cys88. Active-site residues include His175 and Glu177. In terms of domain architecture, GMPS ATP-PPase spans 202–399; that stretch reads WNMENFIDTE…LGISHELVWR (198 aa). Residue 230–236 coordinates ATP; the sequence is SGGVDST. The XMP site is built by Arg303, Asp461, Lys516, and Glu522.

Homodimer. Mg(2+) is required as a cofactor.

It is found in the cytoplasm. The protein localises to the cytosol. It catalyses the reaction XMP + L-glutamine + ATP + H2O = GMP + L-glutamate + AMP + diphosphate + 2 H(+). Its pathway is purine metabolism; GMP biosynthesis; GMP from XMP (L-Gln route): step 1/1. Catalyzes the conversion of xanthine monophosphate (XMP) to GMP in the presence of glutamine and ATP through an adenyl-XMP intermediate. The protein is GMP synthase [glutamine-hydrolyzing] (GUA1) of Kluyveromyces lactis (strain ATCC 8585 / CBS 2359 / DSM 70799 / NBRC 1267 / NRRL Y-1140 / WM37) (Yeast).